A 525-amino-acid polypeptide reads, in one-letter code: G patch domain-containing protein 3 (525 aa).

The tract at residues Y264–T316 is disordered. Residues E275–E298 show a composition bias toward acidic residues. The span at E299–T316 shows a compositional bias: basic and acidic residues. One can recognise a G-patch domain in the interval T410–E458.

In terms of assembly, interacts with mitochondrial MAVS; the interaction is markedly increased upon viral infection. In terms of tissue distribution, expressed in ocular tissues including retinal pigment epithelium, cornea, ciliary muscle and non-pigmented ciliary epithelium. Also expressed in optic nerve, cartilage, skin and lymph node.

The protein resides in the nucleus. Its subcellular location is the cytoplasm. Functionally, involved in transcriptional regulation. It is able to activate transcription from the CXCR4 promoter and therefore it might control neural crest cell migration involved in ocular and craniofacial development. Is a negative regulator of immune antiviral response, acting via down-regulation of RIG-I-like receptors signaling and inhibition of type I interferon production. The control mechanism involves interaction with mitochondrial MAVS and inhibition of MAVS assembly with downstream proteins implicated in antiviral response, such as TBK1 and TRAF6. The chain is G patch domain-containing protein 3 (GPATCH3) from Homo sapiens (Human).